The primary structure comprises 321 residues: AA9 family lytic polysaccharide monooxygenase D (321 aa).

The N-terminal stretch at 1-21 (MRSTIVATFAAGLVVASLVAA) is a signal peptide. Histidine 22 contributes to the Cu(2+) binding site. 2 disulfides stabilise this stretch: cysteine 75/cysteine 192 and cysteine 116/cysteine 120. Asparagine 78 carries an N-linked (GlcNAc...) asparagine glycan. Residue histidine 105 coordinates Cu(2+). The N-linked (GlcNAc...) asparagine glycan is linked to asparagine 152. 2 residues coordinate O2: histidine 178 and glutamine 187. Residue tyrosine 189 participates in Cu(2+) binding. Asparagine 266 carries an N-linked (GlcNAc...) asparagine glycan.

Belongs to the polysaccharide monooxygenase AA9 family. The cofactor is Cu(2+).

It is found in the secreted. The catalysed reaction is [(1-&gt;4)-beta-D-glucosyl]n+m + reduced acceptor + O2 = 4-dehydro-beta-D-glucosyl-[(1-&gt;4)-beta-D-glucosyl]n-1 + [(1-&gt;4)-beta-D-glucosyl]m + acceptor + H2O.. In terms of biological role, lytic polysaccharide monooxygenase (LPMO) that depolymerizes crystalline and amorphous polysaccharides via the oxidation of scissile alpha- or beta-(1-4)-glycosidic bonds, yielding C1 or C4 oxidation products. Catalysis by LPMOs requires the reduction of the active-site copper from Cu(II) to Cu(I) by a reducing agent and H(2)O(2) or O(2) as a cosubstrate. The polypeptide is AA9 family lytic polysaccharide monooxygenase D (Geotrichum candidum (Oospora lactis)).